The chain runs to 622 residues: Protein FAM234B (622 aa).

Residues 1-68 are disordered; that stretch reads MATVLSRALK…EPDSDAEVAE (68 aa). At S16 the chain carries Phosphoserine. T26 is modified (phosphothreonine). Phosphoserine is present on residues S30, S33, and S62. Residues 104 to 124 traverse the membrane as a helical segment; it reads TSVFLLTLGISMILVLLCAFL.

Belongs to the FAM234 family.

The protein resides in the membrane. It is found in the golgi outpost. It localises to the cytoplasm. The protein localises to the cytoskeleton. Its subcellular location is the microtubule organizing center. The chain is Protein FAM234B from Homo sapiens (Human).